The primary structure comprises 226 residues: Large ribosomal subunit protein uL1 (226 aa).

This sequence belongs to the universal ribosomal protein uL1 family. Part of the 50S ribosomal subunit.

Binds directly to 23S rRNA. The L1 stalk is quite mobile in the ribosome, and is involved in E site tRNA release. Functionally, protein L1 is also a translational repressor protein, it controls the translation of the L11 operon by binding to its mRNA. This Selenomonas ruminantium protein is Large ribosomal subunit protein uL1.